The primary structure comprises 120 residues: Large ribosomal subunit protein uL18 (120 aa).

It belongs to the universal ribosomal protein uL18 family. As to quaternary structure, part of the 50S ribosomal subunit; part of the 5S rRNA/L5/L18/L25 subcomplex. Contacts the 5S and 23S rRNAs.

In terms of biological role, this is one of the proteins that bind and probably mediate the attachment of the 5S RNA into the large ribosomal subunit, where it forms part of the central protuberance. This Finegoldia magna (strain ATCC 29328 / DSM 20472 / WAL 2508) (Peptostreptococcus magnus) protein is Large ribosomal subunit protein uL18.